A 273-amino-acid chain; its full sequence is Undecaprenyl-diphosphatase (273 aa).

Helical transmembrane passes span 6-26 (SLLI…LPVS), 45-65 (AKTF…VMFW), 90-110 (LTLI…LVFH), 116-136 (LFNP…LIAA), 190-210 (YAAS…ATVL), 222-242 (ADIP…LIAI), and 252-272 (ISFI…YVVF).

The protein belongs to the UppP family.

It is found in the cell inner membrane. It catalyses the reaction di-trans,octa-cis-undecaprenyl diphosphate + H2O = di-trans,octa-cis-undecaprenyl phosphate + phosphate + H(+). Its function is as follows. Catalyzes the dephosphorylation of undecaprenyl diphosphate (UPP). Confers resistance to bacitracin. The sequence is that of Undecaprenyl-diphosphatase from Salmonella paratyphi C (strain RKS4594).